The sequence spans 179 residues: MSRIGKQPIPVPEKVAVELDGLSLTVKGPKGELSRTLPEGVSISQVDNSIVVSAINSKRKSRERHGLSRSLVANMVEGVSKGYSKKLEIVGVGSRAQVKGKNLIVSAGYSHPVEVIPPDGITFVVENNTNVTVSGIDKELVGNEAAKIRAIRPPEPYKGKGIKYAGERIIRKAGKSGKK.

It belongs to the universal ribosomal protein uL6 family. Part of the 50S ribosomal subunit.

This protein binds to the 23S rRNA, and is important in its secondary structure. It is located near the subunit interface in the base of the L7/L12 stalk, and near the tRNA binding site of the peptidyltransferase center. The chain is Large ribosomal subunit protein uL6 from Prochlorococcus marinus (strain MIT 9211).